The following is a 521-amino-acid chain: HTH-type transcriptional regulatory protein TyrR (521 aa).

In terms of domain architecture, ACT spans 2–72 (RLEVFCQDRI…GVTDVRTVPY (71 aa)). In terms of domain architecture, PAS spans 78–120 (EHRVLSALLVAMPEPVFSVDLRTKVELANPAAQNLFNLDENKI). In terms of domain architecture, Sigma-54 factor interaction spans 207-436 (IVAVTPRMRQ…LKNALYRALT (230 aa)). ATP is bound by residues 235-242 (GDTGTGKD) and 298-307 (ANGGSVLLDE). A DNA-binding region (H-T-H motif) is located at residues 489 to 509 (STRKLAKRLGVSHTAIANKLR).

In terms of assembly, homodimer. In presence of tyrosine (or high concentrations of phenylalanine or tryptophan) and ATP, it self-associates to form an hexamer.

The protein resides in the cytoplasm. Functionally, dual transcriptional regulator of the TyrR regulon, which includes a number of genes coding for proteins involved in the biosynthesis or transport of the three aromatic amino acids, phenylalanine, tyrosine and tryptophan. These three aromatic amino acids act as effectors which bind to the TyrR protein to form an active regulatory protein. Acts by binding specifically to TyrR boxes in the promoter region of the target genes. The chain is HTH-type transcriptional regulatory protein TyrR from Enterobacter agglomerans (Erwinia herbicola).